Consider the following 257-residue polypeptide: Thiazole synthase (257 aa).

Catalysis depends on Lys-98, which acts as the Schiff-base intermediate with DXP. Residues Gly-159, 185 to 186, and 207 to 208 each bind 1-deoxy-D-xylulose 5-phosphate; these read AG and NT.

Belongs to the ThiG family. As to quaternary structure, homotetramer. Forms heterodimers with either ThiH or ThiS.

The protein localises to the cytoplasm. It carries out the reaction [ThiS sulfur-carrier protein]-C-terminal-Gly-aminoethanethioate + 2-iminoacetate + 1-deoxy-D-xylulose 5-phosphate = [ThiS sulfur-carrier protein]-C-terminal Gly-Gly + 2-[(2R,5Z)-2-carboxy-4-methylthiazol-5(2H)-ylidene]ethyl phosphate + 2 H2O + H(+). It functions in the pathway cofactor biosynthesis; thiamine diphosphate biosynthesis. Catalyzes the rearrangement of 1-deoxy-D-xylulose 5-phosphate (DXP) to produce the thiazole phosphate moiety of thiamine. Sulfur is provided by the thiocarboxylate moiety of the carrier protein ThiS. In vitro, sulfur can be provided by H(2)S. The protein is Thiazole synthase of Anaeromyxobacter dehalogenans (strain 2CP-C).